A 137-amino-acid polypeptide reads, in one-letter code: Hydrogenase-4 component J (137 aa).

To E.coli HycH.

In terms of biological role, possible component of hydrogenase 4. This chain is Hydrogenase-4 component J, found in Escherichia coli (strain K12).